We begin with the raw amino-acid sequence, 348 residues long: Uroporphyrinogen decarboxylase (348 aa).

Substrate contacts are provided by residues 28–32 (RQAGR), D78, Y154, T209, and H325.

Belongs to the uroporphyrinogen decarboxylase family. Homodimer.

The protein localises to the cytoplasm. The enzyme catalyses uroporphyrinogen III + 4 H(+) = coproporphyrinogen III + 4 CO2. It participates in porphyrin-containing compound metabolism; protoporphyrin-IX biosynthesis; coproporphyrinogen-III from 5-aminolevulinate: step 4/4. Functionally, catalyzes the decarboxylation of four acetate groups of uroporphyrinogen-III to yield coproporphyrinogen-III. The chain is Uroporphyrinogen decarboxylase from Rhodopseudomonas palustris (strain BisA53).